Reading from the N-terminus, the 242-residue chain is Prosalusin (242 aa).

Positions 1 to 26 (MAAATRGCRPWGSLLGLLGLVSAAAA) are cleaved as a signal peptide. A propeptide spanning residues 27 to 189 (AWDLASLRCT…SSWVVYGTNY (163 aa)) is cleaved from the precursor. 93–100 (GWTGTGKS) is an ATP binding site. N-linked (GlcNAc...) asparagine glycosylation occurs at Asn149. The segment at 210-242 (PPRRSGALPPAPAAPRPALRAQRAGPAGPGAKG) is disordered. Positions 225–235 (RPALRAQRAGP) are enriched in low complexity. The residue at position 241 (Lys241) is a Lysine amide.

It belongs to the ClpA/ClpB family. Torsin subfamily. Amidation of salusin-alpha(29-Gly) by peptidylglycine alpha-amidating monooxygenase, PAM, converts Lys-241-Gly-242 to Lys-241-NH2 and gives raise to salusin-alpha. Isoform 4 is ubiquitously expressed, with high level in vascular endothelial cells and vascular smooth muscle cells.

It localises to the secreted. Functionally, salusins -alpha and -beta may be endocrine and/or paracrine factors able to increase intracellular calcium concentrations and induce cell mitogenesis. Salusins may also be potent hypotensive peptides. In Homo sapiens (Human), this protein is Prosalusin (TOR2A).